The following is a 183-amino-acid chain: Ferritin heavy polypeptide-like 17 (183 aa).

Residues Gln-11 to Cys-160 form the Ferritin-like diiron domain. Glu-28, His-66, Glu-108, and Gln-142 together coordinate Fe cation.

This sequence belongs to the ferritin family. Testis specific. Also expressed in several cancers.

This is Ferritin heavy polypeptide-like 17 (FTHL17) from Homo sapiens (Human).